A 245-amino-acid chain; its full sequence is Ribonuclease 3 (245 aa).

The region spanning 17–146 is the RNase III domain; it reads FTDKMKSLGL…FVGALYLDQG (130 aa). Residue E59 coordinates Mg(2+). D63 is an active-site residue. Positions 132 and 135 each coordinate Mg(2+). The active site involves E135. Residues 172–241 form the DRBM domain; it reads DFKTQFQEYV…AEQAYKLMKN (70 aa).

Belongs to the ribonuclease III family. In terms of assembly, homodimer. Mg(2+) is required as a cofactor.

The protein localises to the cytoplasm. The catalysed reaction is Endonucleolytic cleavage to 5'-phosphomonoester.. Digests double-stranded RNA. Involved in the processing of primary rRNA transcript to yield the immediate precursors to the large and small rRNAs (23S and 16S). Processes some mRNAs, and tRNAs when they are encoded in the rRNA operon. Processes pre-crRNA and tracrRNA of type II CRISPR loci if present in the organism. The polypeptide is Ribonuclease 3 (Staphylococcus epidermidis (strain ATCC 12228 / FDA PCI 1200)).